An 85-amino-acid chain; its full sequence is uncharacterized protein (85 aa).

This is an uncharacterized protein from Sinorhizobium fredii (strain NBRC 101917 / NGR234).